The chain runs to 1593 residues: ABC transporter C family member 8 (1593 aa).

10 helical membrane passes run V27–L47, V75–I95, F100–Y120, L135–I155, F169–F189, F280–L300, Y318–L338, L392–L412, A419–S439, and L505–L525. Residues F280–E561 enclose the ABC transmembrane type-1 1 domain. An ABC transporter 1 domain is found at V594–H818. G627 to S634 is an ATP binding site. Positions M816–V938 are disordered. Positions G844 to R875 form a coiled coil. The span at N851–N865 shows a compositional bias: acidic residues. Positions R877–N886 are enriched in low complexity. Acidic residues predominate over residues E905–G922. Helical transmembrane passes span I1005 to I1025, A1064 to L1084, I1157 to L1177, L1251 to V1271, and G1280 to V1300. Positions A1010–N1308 constitute an ABC transmembrane type-1 2 domain. The 235-residue stretch at I1344–K1578 folds into the ABC transporter 2 domain. G1378–S1385 serves as a coordination point for ATP.

This sequence belongs to the ABC transporter superfamily. ABCC family. Conjugate transporter (TC 3.A.1.208) subfamily.

Its subcellular location is the membrane. The protein is ABC transporter C family member 8 (abcC8) of Dictyostelium discoideum (Social amoeba).